Reading from the N-terminus, the 259-residue chain is UDP-2,3-diacylglucosamine hydrolase (259 aa).

D8, H10, D41, N79, and H114 together coordinate Mn(2+). 79–80 (NR) provides a ligand contact to substrate. Substrate is bound by residues D122, S160, N164, K167, and H195. Mn(2+) contacts are provided by H195 and H197.

The protein belongs to the LpxH family. Mn(2+) serves as cofactor.

Its subcellular location is the cell inner membrane. It catalyses the reaction UDP-2-N,3-O-bis[(3R)-3-hydroxytetradecanoyl]-alpha-D-glucosamine + H2O = 2-N,3-O-bis[(3R)-3-hydroxytetradecanoyl]-alpha-D-glucosaminyl 1-phosphate + UMP + 2 H(+). Its pathway is glycolipid biosynthesis; lipid IV(A) biosynthesis; lipid IV(A) from (3R)-3-hydroxytetradecanoyl-[acyl-carrier-protein] and UDP-N-acetyl-alpha-D-glucosamine: step 4/6. Hydrolyzes the pyrophosphate bond of UDP-2,3-diacylglucosamine to yield 2,3-diacylglucosamine 1-phosphate (lipid X) and UMP by catalyzing the attack of water at the alpha-P atom. Involved in the biosynthesis of lipid A, a phosphorylated glycolipid that anchors the lipopolysaccharide to the outer membrane of the cell. The sequence is that of UDP-2,3-diacylglucosamine hydrolase from Edwardsiella ictaluri (strain 93-146).